A 282-amino-acid chain; its full sequence is Putative hydrolase Bamb_4846 (282 aa).

The Mg(2+) site is built by E124, E126, and D155.

It belongs to the FAH family. Mg(2+) is required as a cofactor.

This Burkholderia ambifaria (strain ATCC BAA-244 / DSM 16087 / CCUG 44356 / LMG 19182 / AMMD) (Burkholderia cepacia (strain AMMD)) protein is Putative hydrolase Bamb_4846.